The following is a 346-amino-acid chain: T-box protein 12 (346 aa).

Positions 33–48 (DEEDVEVDVEDVDDVD) are enriched in acidic residues. The disordered stretch occupies residues 33-66 (DEEDVEVDVEDVDDVDLSSIPSKSPERSRGRPKI). Residues 86 to 268 (LWAKFFDLGT…KNPFAKGFRD (183 aa)) constitute a DNA-binding region (T-box).

It is found in the nucleus. In terms of biological role, transcription factor. Involved in cell fate determination; required to pattern the posterior hindgut. Involved in motor neuron fate determination and maintenance, acting as a transcriptional repressor to counteract gene activation by transcription factor unc-3 in a subset of motor neurons. Required throughout development to repress transcription by unc-3, probably acting by binding to specific promoter elements. Represses expression of VA and VB motor neuron-specific effector genes, such as DEG/ENaC channel del-1 and the innexin inx-12, in DA and DB motor neurons. Represses expression of transcription factor bnc-1, perhaps acting directly, in DA and DB motor neurons. The polypeptide is T-box protein 12 (mab-9) (Caenorhabditis elegans).